An 80-amino-acid chain; its full sequence is Lantibiotic Flvalpha.c (80 aa).

Positions 1 to 38 are cleaved as a propeptide — cleaved by FlvT; that stretch reads MNKNPIYRSEEEAKNIACGNVAAELDENSQALDAINGA. 2 positions are modified to 2,3-didehydrobutyrine; by FlvM1: Thr43 and Thr47. The segment at residues 52 to 55 is a cross-link (beta-methyllanthionine (Thr-Cys); by FlvM1); sequence TLGC. Residues 58–68 constitute a cross-link (lanthionine (Ser-Cys); by FlvM1); sequence SYGLGNGGYCC. 2 consecutive cross-links (beta-methyllanthionine (Thr-Cys); by FlvM1) follow at residues 69–74 and 71–78; these read TYTVEC and TVECSKTC.

Post-translationally, the lanthionine formed by Ser-58 and Cys-68 forms a putative lipid II binding motif. Maturation of FlvA1 peptides involves the enzymatic conversion of Thr, and Ser into dehydrated AA and the formation of thioether bonds with cysteines. Modifications are processed by the flavecin synthetase FlvM1. This is followed by membrane translocation and cleavage of the modified precursor. In terms of processing, contains DL-lanthionine and DL-beta-methyllanthionine, when coepressed in E.coli with the flavecin synthetase FlvM1.

The protein localises to the secreted. Functionally, lanthionine-containing peptide antibiotic (lantibiotic) only active on Gram-positive bacteria in synergy with Flvbeta peptides, which are encoded by the same operon than Flvalpha.a. Shows antibacterial activity in synergy with Flvbeta.b, Flvbeta.c, Flvbeta.e and Flvbeta.g. Does not show antibacterial activity when tested with Flvbeta.a, Flvbeta.d, Flvbeta.f and Flvbeta.h. The bactericidal activity of lantibiotics is based on depolarization of energized bacterial cytoplasmic membranes, initiated by the formation of aqueous transmembrane pores. The protein is Lantibiotic Flvalpha.c of Ruminococcus flavefaciens.